The sequence spans 129 residues: Small ribosomal subunit protein uS11 (129 aa).

Belongs to the universal ribosomal protein uS11 family. In terms of assembly, part of the 30S ribosomal subunit. Interacts with proteins S7 and S18. Binds to IF-3.

In terms of biological role, located on the platform of the 30S subunit, it bridges several disparate RNA helices of the 16S rRNA. Forms part of the Shine-Dalgarno cleft in the 70S ribosome. The protein is Small ribosomal subunit protein uS11 of Mannheimia succiniciproducens (strain KCTC 0769BP / MBEL55E).